We begin with the raw amino-acid sequence, 465 residues long: Argininosuccinate lyase (465 aa).

Belongs to the lyase 1 family. Argininosuccinate lyase subfamily.

The protein resides in the cytoplasm. It catalyses the reaction 2-(N(omega)-L-arginino)succinate = fumarate + L-arginine. Its pathway is amino-acid biosynthesis; L-arginine biosynthesis; L-arginine from L-ornithine and carbamoyl phosphate: step 3/3. The polypeptide is Argininosuccinate lyase (Rhodopseudomonas palustris (strain ATCC BAA-98 / CGA009)).